Consider the following 291-residue polypeptide: MYIDGVFSGGGVKGIALAGAYEVLEEKGFRFKRVAGTSAGAIIAAFIASGYTSKEIHALIEEVDGEKLLDQRYSFLPLKMLQWVSIYWRLGLYKGDTIEKWIADLLRAKGIRVFGDLQKGSLRLIASDLTNGTMIVLPDDLARYGLNPDMFPVARAVRMSCSIPYFFEPIKLKTDTGTATVVDGGVLSNFPIWLFSKERKRPVIGVTLAPRERERPKKNIRNAFELFGALFETMKDAHDARHIASRYEQNIIFLPVDDVMATDFHLTQQKKLALIELGKRRTELFLKQWTY.

In terms of domain architecture, PNPLA spans Gly5 to Ser196. Residues Gly9–Gly14 carry the GXGXXG motif. A helical membrane pass occupies residues Val34–Gly50. The short motif at Gly36–Gly40 is the GXSXG element. Ser38 functions as the Nucleophile in the catalytic mechanism. Asp183 functions as the Proton acceptor in the catalytic mechanism. A DGA/G motif is present at residues Asp183–Gly185.

Its subcellular location is the cell membrane. Functionally, probable lipid hydrolase. This is an uncharacterized protein from Bacillus subtilis (strain 168).